We begin with the raw amino-acid sequence, 415 residues long: Heterogeneous nuclear ribonucleoprotein F (415 aa).

Met-1 is modified (N-acetylmethionine). Met-2 is subject to N-acetylmethionine; in Heterogeneous nuclear ribonucleoprotein F, N-terminally processed. Residues Val-13–Val-85 form the RRM 1 domain. A Glycyl lysine isopeptide (Lys-Gly) (interchain with G-Cter in SUMO) cross-link involves residue Lys-72. The segment at Arg-81 to Phe-86 is interaction with RNA. Lys-87 participates in a covalent cross-link: Glycyl lysine isopeptide (Lys-Gly) (interchain with G-Cter in SUMO2). Ser-104, Ser-107, and Ser-161 each carry phosphoserine. The region spanning Gly-111–Gln-188 is the RRM 2 domain. A Glycyl lysine isopeptide (Lys-Gly) (interchain with G-Cter in SUMO2) cross-link involves residue Lys-167. Residues Arg-179–Phe-184 form an interaction with RNA region. Residue Lys-185 forms a Glycyl lysine isopeptide (Lys-Gly) (interchain with G-Cter in SUMO2) linkage. A phosphoserine mark is found at Ser-187, Ser-193, and Ser-195. The residue at position 200 (Lys-200) is an N6-acetyllysine; alternate. Lys-200 is covalently cross-linked (Glycyl lysine isopeptide (Lys-Gly) (interchain with G-Cter in SUMO2); alternate). Thr-215 is modified (phosphothreonine). N6-acetyllysine; alternate is present on Lys-224. Lys-224 participates in a covalent cross-link: Glycyl lysine isopeptide (Lys-Gly) (interchain with G-Cter in SUMO2); alternate. Phosphoserine is present on Ser-265. The 78-residue stretch at His-289–Gly-366 folds into the RRM 3 domain. The segment at Arg-355–Phe-360 is interaction with RNA.

As to quaternary structure, identified in the spliceosome C complex. Interacts with AGO1, AGO2, TBP and TXNL4/DIM1. In terms of processing, sumoylated.

It is found in the nucleus. Its subcellular location is the nucleoplasm. Component of the heterogeneous nuclear ribonucleoprotein (hnRNP) complexes which provide the substrate for the processing events that pre-mRNAs undergo before becoming functional, translatable mRNAs in the cytoplasm. Plays a role in the regulation of alternative splicing events. Binds G-rich sequences in pre-mRNAs and keeps target RNA in an unfolded state. This Macaca fascicularis (Crab-eating macaque) protein is Heterogeneous nuclear ribonucleoprotein F (HNRNPF).